Reading from the N-terminus, the 141-residue chain is Nucleoside diphosphate kinase (141 aa).

Residues Lys-11, Phe-59, Arg-87, Thr-93, Arg-104, and Asn-114 each coordinate ATP. The Pros-phosphohistidine intermediate role is filled by His-117.

It belongs to the NDK family. In terms of assembly, homotetramer. It depends on Mg(2+) as a cofactor.

Its subcellular location is the cytoplasm. It catalyses the reaction a 2'-deoxyribonucleoside 5'-diphosphate + ATP = a 2'-deoxyribonucleoside 5'-triphosphate + ADP. The enzyme catalyses a ribonucleoside 5'-diphosphate + ATP = a ribonucleoside 5'-triphosphate + ADP. Functionally, major role in the synthesis of nucleoside triphosphates other than ATP. The ATP gamma phosphate is transferred to the NDP beta phosphate via a ping-pong mechanism, using a phosphorylated active-site intermediate. The chain is Nucleoside diphosphate kinase from Halorhodospira halophila (strain DSM 244 / SL1) (Ectothiorhodospira halophila (strain DSM 244 / SL1)).